A 364-amino-acid chain; its full sequence is Guanine nucleotide-binding protein alpha-6 subunit (364 aa).

A disordered region spans residues 1–29 (MGAGATGLRGARLSPEERANSSKSRAIDR). Gly-2 is lipidated: N-myristoyl glycine. Residues 14–29 (SPEERANSSKSRAIDR) are compositionally biased toward basic and acidic residues. The 324-residue stretch at 40–363 (NRFKILLLGT…NENLRSAGLH (324 aa)) folds into the G-alpha domain. The segment at 43–56 (KILLLGTAESGKST) is G1 motif. GTP-binding positions include 48 to 55 (GTAESGKS), 186 to 192 (VHCRIST), 211 to 215 (DVGGQ), 280 to 283 (NKYD), and Ala-335. Ser-55 and Thr-192 together coordinate Mg(2+). The interval 184–192 (DIVHCRIST) is G2 motif. Residues 207–216 (FKMVDVGGQR) form a G3 motif region. A G4 motif region spans residues 276–283 (VLFLNKYD). A G5 motif region spans residues 333-338 (TTATDT).

This sequence belongs to the G-alpha family. As to quaternary structure, g proteins are composed of 3 units; alpha, beta and gamma. The alpha chain contains the guanine nucleotide binding site.

In terms of biological role, guanine nucleotide-binding proteins (G proteins) are involved as modulators or transducers in various transmembrane signaling systems. The polypeptide is Guanine nucleotide-binding protein alpha-6 subunit (gpa-6) (Caenorhabditis elegans).